Here is a 201-residue protein sequence, read N- to C-terminus: Holliday junction branch migration complex subunit RuvA (201 aa).

The tract at residues 1 to 64 (MYAYIRGKLT…EDAQLLYGFI (64 aa)) is domain I. Residues 65–143 (NEEEKDMFLS…ITRETTETLL (79 aa)) form a domain II region. A flexible linker region spans residues 144–150 (SMNEENS). The interval 151-201 (NSENLVKEALLALEALGYSKREISKVEKVLNKSTFDSVDEAVKLGLKTLVS) is domain III.

It belongs to the RuvA family. Homotetramer. Forms an RuvA(8)-RuvB(12)-Holliday junction (HJ) complex. HJ DNA is sandwiched between 2 RuvA tetramers; dsDNA enters through RuvA and exits via RuvB. An RuvB hexamer assembles on each DNA strand where it exits the tetramer. Each RuvB hexamer is contacted by two RuvA subunits (via domain III) on 2 adjacent RuvB subunits; this complex drives branch migration. In the full resolvosome a probable DNA-RuvA(4)-RuvB(12)-RuvC(2) complex forms which resolves the HJ.

It localises to the cytoplasm. In terms of biological role, the RuvA-RuvB-RuvC complex processes Holliday junction (HJ) DNA during genetic recombination and DNA repair, while the RuvA-RuvB complex plays an important role in the rescue of blocked DNA replication forks via replication fork reversal (RFR). RuvA specifically binds to HJ cruciform DNA, conferring on it an open structure. The RuvB hexamer acts as an ATP-dependent pump, pulling dsDNA into and through the RuvAB complex. HJ branch migration allows RuvC to scan DNA until it finds its consensus sequence, where it cleaves and resolves the cruciform DNA. The polypeptide is Holliday junction branch migration complex subunit RuvA (Staphylococcus haemolyticus (strain JCSC1435)).